Reading from the N-terminus, the 4678-residue chain is E3 ubiquitin-protein ligase MYCBP2 (4678 aa).

Disordered stretches follow at residues 87–127 (DRDQ…RSKS), 172–192 (SKNSVQSGESDSDEEEESKEP), and 609–628 (ASKGEDGESTKSRRQSKPYK). The span at 100–124 (SRNKKILNKKKLKRKQKSKSKVKTR) shows a compositional bias: basic residues. Phosphoserine occurs at positions 127, 178, 181, and 183. RCC1 repeat units lie at residues 600–655 (DGSI…VISK), 699–755 (NGEV…MMCP), 907–957 (KRDK…VLME), 958–1008 (NGDV…VLLM), and 1010–1066 (GQVF…LRID). Over residues 898–910 (RSHPAQLKHKRDK) the composition is skewed to basic residues. The interval 898-928 (RSHPAQLKHKRDKHKDGSGERGEKDASKITT) is disordered. The span at 911-924 (HKDGSGERGEKDAS) shows a compositional bias: basic and acidic residues. A PHR domain 1 region spans residues 1235 to 1386 (NRFESHGGGW…GQIPQLLYRL (152 aa)). S1624 is subject to Phosphoserine. Residues 1726–1884 (NRFTKTSQGR…GQIPQILYYR (159 aa)) are PHR domain 2. C1748 and C1863 are oxidised to a cystine. Disordered stretches follow at residues 1993–2012 (FNPNQSTDSTTGNQPEQGLS) and 2321–2340 (QQDQAKKPQRIPGSPAVTAA). Polar residues predominate over residues 1994–2012 (NPNQSTDSTTGNQPEQGLS). An RAE1 binding region spans residues 2022 to 2550 (VIESEHPYKP…NQHLGKSLLV (529 aa)). A Filamin repeat occupies 2341 to 2443 (SSNTDMTYGG…IDAGLEVKVK (103 aa)). T2683 carries the phosphothreonine modification. Disordered stretches follow at residues 2709–2931 (LGNS…LHSE), 2943–2963 (TNSLTDSTCDDSSEFKSVDEG), 2979–3020 (EQEM…EPAK), and 3066–3085 (APIRSSLNSQQPTEEKETKL). The span at 2718 to 2733 (NISTSSKPASTSGKSE) shows a compositional bias: polar residues. Positions 2742–2760 (LKPDGRMSRTTADQKKPRG) are enriched in basic and acidic residues. S2769 bears the Phosphoserine mark. Residues 2775-2785 (DAAKLRSDSHS) show a composition bias toward basic and acidic residues. A compositionally biased stretch (polar residues) spans 2786–2810 (RSLSPNHNTLQTLKSDGRMPSSSRA). 7 positions are modified to phosphoserine: S2787, S2789, S2833, S2839, S2869, S2871, and S2920. Residues 2828 to 2843 (PANRSSPSGASSPRSS) show a composition bias toward low complexity. The span at 2860-2871 (TKLDPPRERSKS) shows a compositional bias: basic and acidic residues. Phosphoserine is present on S2985. Positions 2988–3001 (ISRKCANRHTRPKK) are enriched in basic residues. S3090, S3478, and S3505 each carry phosphoserine. Positions 3605–3631 (PVEPEEEEDEENKTSKENSEQEKDTRV) are disordered. Basic and acidic residues predominate over residues 3616 to 3631 (NKTSKENSEQEKDTRV). One can recognise a DOC domain in the interval 3719-3897 (SISIQSGFEA…VAQQRNCEAE (179 aa)). Residues 3915 to 3934 (SGDAEPTPEQEEKALLSSPE) are disordered. Position 3921 is a phosphothreonine (T3921). S3931 and S3932 each carry phosphoserine. 10 residues coordinate Zn(2+): C4428, C4431, C4446, H4448, H4451, C4454, C4475, C4478, C4544, and C4547. An RING-type; atypical zinc finger spans residues 4428 to 4479 (CMICFTEALSAAPAIQLDCSHIFHLQCCRRVLENRWLGPRITFGFISCPICK). The tandem cysteine domain stretch occupies residues 4539 to 4676 (YAYYVCYKCR…LGCGVCRNAH (138 aa)). C4558 is a catalytic residue. C4575, C4578, C4587, H4590, C4599, C4602, and C4603 together coordinate Zn(2+). Residue C4610 is part of the active site. Residues C4617, C4620, C4638, C4652, H4658, C4669, and C4672 each coordinate Zn(2+).

Belongs to the RING-Cys relay (RCR) family. Interacts with MYC. Interacts with TSC2 (tuberin) when TSC2 is in complex with TSC1 (hamartin). Interacts with FBXO45. Interacts with RAE1. Interacts with CPNE1 (via VWFA domain) and CPNE4 (via VWFA domain). Interacts with (sumoylated) RANGAP1; interaction with sumoylated RANGAP1 inhibits E3 ubiquitin-protein ligase activity and promotes MYCBP2 translocation to the nucleus. Interacts with RAN. Interacts with ATP13A2; the interaction inhibits the ubiquitination of TSC2 by MYCBP2. Interacts with USP11. Autoubiquitinated. In terms of tissue distribution, expressed in all tissues examined, expression is exceptionally abundant in brain and thymus. Colocalizes with TSC1 and TSC2 along the neurites and in the growth cones. Highly expressed in peripheral and central neurons. Colocalized with TSC1 in one of the filopodial extensions at the tip of a growth cone.

It is found in the nucleus. The protein localises to the cell projection. Its subcellular location is the axon. It localises to the cytoplasm. The protein resides in the cytoskeleton. It carries out the reaction [E2 ubiquitin-conjugating enzyme]-S-ubiquitinyl-L-cysteine + [acceptor protein]-L-threonine = [E2 ubiquitin-conjugating enzyme]-L-cysteine + [acceptor protein]-3-O-ubiquitinyl-L-threonine.. It participates in protein modification; protein ubiquitination. Atypical E3 ubiquitin-protein ligase which specifically mediates ubiquitination of threonine and serine residues on target proteins, instead of ubiquitinating lysine residues. Shows esterification activity towards both threonine and serine, with a preference for threonine, and acts via two essential catalytic cysteine residues that relay ubiquitin to its substrate via thioester intermediates. Interacts with the E2 enzymes UBE2D1, UBE2D3, UBE2E1 and UBE2L3. Plays a key role in neural development, probably by mediating ubiquitination of threonine residues on target proteins. Involved in different processes such as regulation of neurite outgrowth, synaptic growth, synaptogenesis and axon degeneration. Required for the formation of major central nervous system axon tracts. Required for proper axon growth by regulating axon navigation and axon branching: acts by regulating the subcellular location and stability of MAP3K12/DLK. Required for proper localization of retinogeniculate projections but not for eye-specific segregation. Regulates axon guidance in the olfactory system. Involved in Wallerian axon degeneration, an evolutionarily conserved process that drives the loss of damaged axons: acts by promoting destabilization of NMNAT2, probably via ubiquitination of NMNAT2. Catalyzes ubiquitination of threonine and/or serine residues on NMNAT2, consequences of threonine and/or serine ubiquitination are however unknown. Regulates the internalization of TRPV1 in peripheral sensory neurons. Mediates ubiquitination and subsequent proteasomal degradation of TSC2/tuberin. Independently of the E3 ubiquitin-protein ligase activity, also acts as a guanosine exchange factor (GEF) for RAN in neurons of dorsal root ganglia. May function as a facilitator or regulator of transcriptional activation by MYC. Acts in concert with HUWE1 to regulate the circadian clock gene expression by promoting the lithium-induced ubiquination and degradation of NR1D1. The sequence is that of E3 ubiquitin-protein ligase MYCBP2 from Homo sapiens (Human).